Reading from the N-terminus, the 413-residue chain is Arginine biosynthesis bifunctional protein ArgJ (413 aa).

Substrate is bound by residues threonine 160, lysine 186, threonine 197, glutamate 284, asparagine 408, and serine 413. Threonine 197 (nucleophile) is an active-site residue.

It belongs to the ArgJ family. Heterotetramer of two alpha and two beta chains.

The protein resides in the cytoplasm. It carries out the reaction N(2)-acetyl-L-ornithine + L-glutamate = N-acetyl-L-glutamate + L-ornithine. The catalysed reaction is L-glutamate + acetyl-CoA = N-acetyl-L-glutamate + CoA + H(+). The protein operates within amino-acid biosynthesis; L-arginine biosynthesis; L-ornithine and N-acetyl-L-glutamate from L-glutamate and N(2)-acetyl-L-ornithine (cyclic): step 1/1. It participates in amino-acid biosynthesis; L-arginine biosynthesis; N(2)-acetyl-L-ornithine from L-glutamate: step 1/4. Its function is as follows. Catalyzes two activities which are involved in the cyclic version of arginine biosynthesis: the synthesis of N-acetylglutamate from glutamate and acetyl-CoA as the acetyl donor, and of ornithine by transacetylation between N(2)-acetylornithine and glutamate. In Burkholderia mallei (strain ATCC 23344), this protein is Arginine biosynthesis bifunctional protein ArgJ.